We begin with the raw amino-acid sequence, 278 residues long: Elongation factor Ts (278 aa).

Positions 82-85 (TDFV) are involved in Mg(2+) ion dislocation from EF-Tu.

Belongs to the EF-Ts family.

The protein resides in the cytoplasm. Functionally, associates with the EF-Tu.GDP complex and induces the exchange of GDP to GTP. It remains bound to the aminoacyl-tRNA.EF-Tu.GTP complex up to the GTP hydrolysis stage on the ribosome. This is Elongation factor Ts from Streptomyces avermitilis (strain ATCC 31267 / DSM 46492 / JCM 5070 / NBRC 14893 / NCIMB 12804 / NRRL 8165 / MA-4680).